An 830-amino-acid chain; its full sequence is ATP-dependent DNA helicase chl-1 (830 aa).

Positions 1-403 (MDEFSFPFQP…HNLLYMKQLE (403 aa)) constitute a Helicase ATP-binding domain. An ATP-binding site is contributed by 35-42 (SPTGTGKS). Basic and acidic residues-rich tracts occupy residues 124–140 (GMVE…RDTD) and 157–168 (NDEKSEKQRDSD). A disordered region spans residues 124 to 173 (GMVEVSRKRKAPARDTDQFLEPQDEAAPSEEYNNDEKSEKQRDSDFFDDV). Residues C222, C240, C272, and C308 each coordinate [4Fe-4S] cluster. The DEAH box motif lies at 351 to 354 (DEAH).

It belongs to the DEAD box helicase family. DEAH subfamily. DDX11/CHL1 sub-subfamily. [4Fe-4S] cluster serves as cofactor.

It localises to the nucleus. The enzyme catalyses Couples ATP hydrolysis with the unwinding of duplex DNA at the replication fork by translocating in the 5'-3' direction. This creates two antiparallel DNA single strands (ssDNA). The leading ssDNA polymer is the template for DNA polymerase III holoenzyme which synthesizes a continuous strand.. It carries out the reaction ATP + H2O = ADP + phosphate + H(+). In terms of biological role, required for normal cell proliferation and chromosome stability. Plays a role in DNA repair during replication. This is ATP-dependent DNA helicase chl-1 from Caenorhabditis elegans.